A 151-amino-acid chain; its full sequence is Small ribosomal subunit protein uS15 (151 aa).

A compositionally biased stretch (basic residues) spans 1–16; sequence MPHRSRDKKGRSRSVR. Residues 1–20 form a disordered region; that stretch reads MPHRSRDKKGRSRSVRPAHP.

This sequence belongs to the universal ribosomal protein uS15 family. Part of the 30S ribosomal subunit.

This is Small ribosomal subunit protein uS15 from Pyrobaculum aerophilum (strain ATCC 51768 / DSM 7523 / JCM 9630 / CIP 104966 / NBRC 100827 / IM2).